An 837-amino-acid chain; its full sequence is MTTKRAYKLQEFVAHSAAVNCLKIGRKSSRVLVTGGEDHKVNLWAIGKPNAILSLYGHSSGIDSVTFDASEVLVAAGAASGTIKLWDLEEAKIVRTLTGHRSNCISVDFHPFGEFFASGSLDTNLKIWDIRKKGCIHTYKGHTRGVNVLRFTPDGRWVVSGGEDNIVKVWDLTAGKLLTEFKSHEGQIQSLDFHPHEFLLATGSADRTVKFWDLETFELIGSGGPETAGVRCLSFNPDGKTVLCGLQESLKIFSWEPIRCHDGVDVGWSRLSDMNVHEGKLLGCSYNQSCVGVWVVDLSRTEPCMAGDTAQSNGHPEKRSCSGRDPVVLNDNNSKTVLGKLSVSQNVDPLLKETKSLGRLSVSQNSDPSTKETKSIGRSSTSQNSESSMKESKPLGRLSVSQNSDVSKESRTFSSTGSLPGTPHRVSSTNVSKATSGVSTAVSNAATSRRNFTKANPKANPVNKAADFAPVIVPRADPRIEQATESRAELDIIARTMPYSLQAADSRRSPSSRNNPDLPDASVLEMSESQPVEPNNIPDGGTLPGGKVGMRGATERSINDFRYKRYGRSNSRSRMGSPPRNHDENYDLVSHRSNRDPSPTESQKGGRFQSLVINRERRGRFSNFEGPVSNFSSGNMPAPNIRPSNMFKQRGNHMPVEQGIDSPSEENIVEDIMGKHNQFVSSMQSRLAKLQVVRRYWERNDVKNSIGSIEKMADNAVTADVLGIITERNEILTLDNCTSLLPLLTALLGSGMDQHLSVSLDLLLKLVRLYGSPIYSSLSAPASVGVDIEAEQRIERYSRCFVELEKVKACLPSLARRGGLVAKSVLELNLAFQEVSS.

7 WD repeats span residues 14–54, 57–96, 99–138, 141–182, 184–222, 225–265, and 267–304; these read AHSA…AILS, GHSS…IVRT, GHRS…CIHT, GHTR…TEFK, HEGQ…LIGS, PETA…DGVD, and GWSR…TEPC. Positions 115 to 131 match the DWD box motif; it reads FFASGSLDTNLKIWDIR. 3 disordered regions span residues 307–328, 358–462, and 501–614; these read GDTA…DPVV, GRLS…ANPV, and LQAA…LVIN. 2 stretches are compositionally biased toward polar residues: residues 376 to 387 and 412 to 450; these read IGRSSTSQNSES and TFSS…TSRR. The span at 509–520 shows a compositional bias: low complexity; the sequence is SPSSRNNPDLPD. Composition is skewed to basic and acidic residues over residues 553 to 563 and 580 to 595; these read ATERSINDFRY and RNHD…RSNR.

Belongs to the WD repeat KATNB1 family. Component of KTN80-KTN1 complexes composed of a hexamer of KTN1-KTN80 heterodimers that sense microtubule (MT) geometry to confer precise MT severing. Interacts directly with AAA1/KTN1, and weakly with KTN80.1 and KTN80.3. In terms of tissue distribution, expressed in siliques, flowers, leaves, stems and roots.

The protein localises to the cytoplasm. The protein resides in the cytoskeleton. In terms of biological role, may participate in a complex which severs microtubules in an ATP-dependent manner. This activity may promote rapid reorganization of cellular microtubule arrays. Confers precision to microtubule (MT) severing by specific targeting of KTN1 to MT cleavage sites such as crossover or branching nucleation sites. Together with other KTN80s, regulates cell elongation by modulating MT organization. In Arabidopsis thaliana (Mouse-ear cress), this protein is Katanin p80 WD40 repeat-containing subunit B1 homolog KTN80.4.